Here is a 129-residue protein sequence, read N- to C-terminus: Dormancy-associated protein 2 (129 aa).

Positions 1-25 (MDSRKAMLILGLLAMVLLISSEVSA) are cleaved as a signal peptide. Residues 110–129 (GGYHGGGGHGGHGGASNNGN) are disordered.

It belongs to the DRM1/ARP family. As to expression, expressed in axilary buds. Detected in growing stems, leaflets and floral organs, but not in roots.

This chain is Dormancy-associated protein 2, found in Pisum sativum (Garden pea).